Consider the following 293-residue polypeptide: Cytidine deaminase 6 (293 aa).

2 consecutive CMP/dCMP-type deaminase domains span residues 16-147 and 178-293; these read RGPS…FGPD and EDCS…TNKN. 57 to 59 contributes to the substrate binding site; it reads NVE. Histidine 70 contacts Zn(2+). The active-site Proton donor is the glutamate 72. Cysteine 103 and cysteine 106 together coordinate Zn(2+).

The protein belongs to the cytidine and deoxycytidylate deaminase family. As to quaternary structure, homodimer. It depends on Zn(2+) as a cofactor.

The enzyme catalyses cytidine + H2O + H(+) = uridine + NH4(+). It carries out the reaction 2'-deoxycytidine + H2O + H(+) = 2'-deoxyuridine + NH4(+). This enzyme scavenges exogenous and endogenous cytidine and 2'-deoxycytidine for UMP synthesis. This chain is Cytidine deaminase 6 (CDA6), found in Arabidopsis thaliana (Mouse-ear cress).